The chain runs to 251 residues: Protein TK1472 (251 aa).

Belongs to the CinA family.

The sequence is that of Protein TK1472 from Thermococcus kodakarensis (strain ATCC BAA-918 / JCM 12380 / KOD1) (Pyrococcus kodakaraensis (strain KOD1)).